The following is a 473-amino-acid chain: Photosystem II CP43 reaction center protein (473 aa).

Positions 1-14 (MKTLYSLRRFYPVE) are excised as a propeptide. Thr15 carries the post-translational modification N-acetylthreonine. Thr15 is modified (phosphothreonine). 5 consecutive transmembrane segments (helical) span residues 69–93 (LFEVAHFVPEKPMYEQGLILLPHLA), 134–155 (LLGPETLEESFPFFGYVWKDRN), 178–200 (KALYFGGVYDTWAPGGGDVRRIT), 255–275 (KPFAWARRAFVWSGEAYLSYS), and 291–312 (WFNNTAYPSEFYGPTGPEASQA). Glu367 provides a ligand contact to [CaMn4O5] cluster. Residues 447–471 (RARAAAAGFEKGIDRDFEPVLFMTP) traverse the membrane as a helical segment.

This sequence belongs to the PsbB/PsbC family. PsbC subfamily. PSII is composed of 1 copy each of membrane proteins PsbA, PsbB, PsbC, PsbD, PsbE, PsbF, PsbH, PsbI, PsbJ, PsbK, PsbL, PsbM, PsbT, PsbX, PsbY, PsbZ, Psb30/Ycf12, at least 3 peripheral proteins of the oxygen-evolving complex and a large number of cofactors. It forms dimeric complexes. Binds multiple chlorophylls and provides some of the ligands for the Ca-4Mn-5O cluster of the oxygen-evolving complex. It may also provide a ligand for a Cl- that is required for oxygen evolution. PSII binds additional chlorophylls, carotenoids and specific lipids. is required as a cofactor.

It is found in the plastid. The protein localises to the chloroplast thylakoid membrane. In terms of biological role, one of the components of the core complex of photosystem II (PSII). It binds chlorophyll and helps catalyze the primary light-induced photochemical processes of PSII. PSII is a light-driven water:plastoquinone oxidoreductase, using light energy to abstract electrons from H(2)O, generating O(2) and a proton gradient subsequently used for ATP formation. The polypeptide is Photosystem II CP43 reaction center protein (Nuphar advena (Common spatterdock)).